The following is a 230-amino-acid chain: Heptaprenylglyceryl phosphate synthase (230 aa).

K12 contributes to the sn-glycerol 1-phosphate binding site. Mg(2+)-binding residues include D14 and T40. Sn-glycerol 1-phosphate-binding positions include 159-164, G189, and 209-210; these read YIEYSG and GD.

Belongs to the GGGP/HepGP synthase family. Group I subfamily. In terms of assembly, homodimer. The cofactor is Mg(2+).

It catalyses the reaction sn-glycerol 1-phosphate + all-trans-heptaprenyl diphosphate = 3-heptaprenyl-sn-glycero-1-phosphate + diphosphate. It functions in the pathway membrane lipid metabolism; glycerophospholipid metabolism. Its function is as follows. Prenyltransferase that catalyzes in vivo the transfer of the heptaprenyl moiety of heptaprenyl pyrophosphate (HepPP; 35 carbon atoms) to the C3 hydroxyl of sn-glycerol-1-phosphate (G1P), producing heptaprenylglyceryl phosphate (HepGP). This reaction is an ether-bond-formation step in the biosynthesis of archaea-type G1P-based membrane lipids found in Bacillales. This is Heptaprenylglyceryl phosphate synthase from Staphylococcus aureus (strain USA300).